The sequence spans 433 residues: GTPase Der (433 aa).

EngA-type G domains are found at residues Lys5–Asn167 and Ile174–Glu349. Residues Gly11–Ser18, Asp58–Phe62, Asn119–Asp122, Gly180–Ser187, Asp227–Ile231, and Ser292–Asp295 each bind GTP. Residues Phe350–Ile429 enclose the KH-like domain.

Belongs to the TRAFAC class TrmE-Era-EngA-EngB-Septin-like GTPase superfamily. EngA (Der) GTPase family. In terms of assembly, associates with the 50S ribosomal subunit.

Functionally, GTPase that plays an essential role in the late steps of ribosome biogenesis. This is GTPase Der from Borreliella afzelii (strain PKo) (Borrelia afzelii).